A 226-amino-acid chain; its full sequence is Endonuclease NucS (226 aa).

It belongs to the NucS endonuclease family.

It localises to the cytoplasm. Functionally, cleaves both 3' and 5' ssDNA extremities of branched DNA structures. In Mycobacterium tuberculosis (strain CDC 1551 / Oshkosh), this protein is Endonuclease NucS.